Here is a 317-residue protein sequence, read N- to C-terminus: Protein lifeguard 2 (317 aa).

Residues 1 to 54 form a disordered region; that stretch reads MTQGKLSVANKAPGTEGQQHQANGEKKDAPAVPSAPPSYEEATSGEGLKAGTFP. 3 helical membrane-spanning segments follow: residues 107-127, 139-159, and 166-186; these read VYTI…LFTF, PGWY…LACC, and FPWN…LTGM. Residue asparagine 192 is glycosylated (N-linked (GlcNAc...) asparagine). Transmembrane regions (helical) follow at residues 195 to 215, 226 to 246, 252 to 272, and 291 to 311; these read SVLL…IFSF, GVLF…AVLL, PWLH…FLAF, and IFGA…FLQL.

The protein belongs to the BI1 family. LFG subfamily. As to quaternary structure, interacts with FAS/TNFRSF6 and BAX. Brain. Highly expressed in cerebellum, also found in cortex, olfactory bulb, and hippocampus.

The protein resides in the cell membrane. Its subcellular location is the membrane raft. The protein localises to the postsynaptic cell membrane. Antiapoptotic protein which protects cells uniquely from Fas-induced apoptosis. Regulates Fas-mediated apoptosis in neurons by interfering with caspase-8 activation. Plays a role in cerebellar development by affecting cerebellar size, internal granular layer (IGL) thickness, and Purkinje cell (PC) development. This chain is Protein lifeguard 2 (Faim2), found in Mus musculus (Mouse).